An 81-amino-acid chain; its full sequence is Elsinochrome C biosynthesis cluster protein SNOG_08613 (81 aa).

In terms of biological role, part of the gene cluster that mediates the biosynthesis of elsinochrome C, a perelyenequinone phytotoxin structurally similar to cercosporin. The first step of elsinochrome C biosynthesis is performed by the polyketide synthase elcA which catalyzes the formation of nor-toralactone. The starter unit acyltransferase (SAT) domain of elcA initiates polyketide extension by the selective utilization of acetyl-CoA, which is elongated to the heptaketide in the beta-ketoacyl synthase (KS) domain by successive condensations with six malonyl units introduced by the malonyl acyltransferase (MAT) domain. The product template (PT) domain catalyzes C4-C9 and C2-C11 aldol cyclizations and dehydrations to a trihydroxynaphthalene, which is thought to be delivered to the thioesterase (TE) domain for product release. The bifunctional enzyme elcB then methylates nor-toralactone to toralactone before conducting an unusual oxidative aromatic ring opening. The next step in perylenequinone biosynthesis is an O-methylation at the nascent OH-6 of the elcB product performed by the O-methyltransferase elcD. The oxidative coupling of the two monomeric naphthol units in perylenequinone biosynthesis is catalyzed by the FAD-dependent monooxygenase elcE and the multicopper oxidase elcG. ElcG might catalyze the first intermolecular coupling in a regio- and stereo-selective manner via a phenol radical coupling mechanism and the elcE could forge the second C-C bond intramolecularly via a hydride transfer mechanism. The fasciclin domain-containing protein elcF might also play a role duting this step. The last piece of the puzzle in the biosynthesis of elsinochrome C is the additional annulation by enolate coupling to afford the dihydrobenzo(ghi)perylenequinone system, catalyzed by the FAD-dependent monooxygenase elcH. The polypeptide is Elsinochrome C biosynthesis cluster protein SNOG_08613 (Phaeosphaeria nodorum (strain SN15 / ATCC MYA-4574 / FGSC 10173) (Glume blotch fungus)).